The following is a 3412-amino-acid chain: MSGRKAQGKTLGVNMVRRGARSLSNKIKQKTKQIGNRPGPSRGVQGFIFFFLFNILTGKKLTTHLKRLWRMLDPRQGLAVLRKVKRVVASLMIGLSSRKRRSNEMAMMPLLILSMVILAGGVTLVRKNRWLLLNVTAEDLGKTFSLGTGNCTTNILEAKYWCPDSMEYNCPNLSPREEPDDIDCWCYGVENVRVAYGRCDAVGRSKRSRRAIDLPTHENHGLKTRQEKWMAGRMGERQLQKIERWLVRNPFFAITALAIAYLVGNNMTQRVVIALLVLAVGPAYSAHCIGITDRDFIEGVHGGTWVSATLEQGKCVTVMAPDKPSLDISLQTVAIDGPAEARKVCYSAVLTHVKINDKCPSTGEAHLAEENDGDNACKRTYSDRGWGNGCGLFGKGSIVACAKFTCAKSMSLFEVDQTKIQYVIRAQLHVGAKQENWNTDIKTLKFDALSGSQEAEFTGYGKATLECQVQTAVDFGNSYIAEMEKDSWIVDRQWAQDLTLPWQSGSGGIWREMHHLVEFEPPHAATIRVLALGNQEGSLKTALTGAMRVTKDENDNNLYKLHGGHVSCRVKLSALTLKGTSYKMCTDKMSFVKNPTDTGHGTVVMQVKVPKGAPCKIPVIVADDLTAAVNKGILVTVNPIASTNDDEVLIEVNPPFGDSYIIVGTGDSRLTYQWHKEGSSIGKLFTQTMKGAERLAVMGDAAWDFSSAGGFFTSVGKGIHTVFGSAFQGLFGGLSWITKVIMGAVLIWVGINTRNMTMSMSMILVGVIMMFLSLGVGADQGCAVNFGKRELKCGDGIFVFRDSDDWLTKYSYYPEDPVKLASIIKASHEEGKCGLNSVDSLEHEMWRSRADEINAIFEENEVDISVVVQDPKNIYQRGTHPFSRIRDGLQYGWKTWGKNLIFSPGRKNGSFIIDGKSRKECPFSNRVWNSFQIEEFGMGVFTTRVFMDAVFDYSVDCDGAILGAAVNGKKSAHGSPTFWMGSHEVNGTWMVHTLETLDYKECEWPLTHTIGTSVEESDMFMPRSIGGPVSSHNHIPGYKVQTNGPWMQVPLEVRREPCPGTSVVLDTGCDGRGKSTRSTTDSGKIIPEWCCRSCTMPPVSFHGSDGCWYPMEIRPMKTHESHLVRSWVTAGEVHAVPFGLVSMMIAMEVVLRKRQGPKQMLVGGIILLGAMLVGQVTVLDLVKLIVAVGLHFHEINNGGDAMYMALIASFSIRPGLLVGFGLRTLWSPRERLVMAFGAAMVEVALGGMMGGLWQYLNAVSLCVLTINAISSRKASNAVLPLMALLTPVTMHEVRMATMLFCTVVIVGVLHQNAKDTSMQKTIPIVALTLTSYMGLTQPFLGLCAYMSTQVFGRRSIPVNEALAAAGLVGVLAGLAFQDMENFLGPIAVGGILMMLVSVAGKVDGLELKKLGEVSWEEEAEISGSSSRYDVALSEQGEFKLLSEDKVPWDQIVMTSLALVGAAIHPFALLLVLGGWVLHIKGARRSGDVLWDIPTPKVIEECEYLEDGIYGIFQSTFLGASQRGVGVAQGGVFHTMWHVTRGAFLLRNGKKLVPSWASVKEDLVAYGGSWKLDGKWDGEEEVQLIAAVPGKAVVNVQTKPSVFKVRNGGEIGAVALDYPSGTSGSPIVNRSGEVVGLYGNGILVGDNSFVSAISQTEVKEESKEELQEIPTMLKKGMTTILDFHPGAGKTRRFLPQILAECARRRLRTLVLAPTRVVLSEMKEAFHGLDVKFHTQAFSAHGSGKEVIDAMCHATLTYRMLEPTRAVNWEVIIMDEAHFLDPASIAARGWAAHRARANESATILMTATPPGTSDEFPHSNGEIEDVQTDIPSEPWTSGHEWILADKRPTAWFLPSIRAANVMAASLRKAGKSVVVLNRKTFEKEYPTIKQKRPDFILATDIAEMGANLCVERVLDCRTAYKPVLVDEGRKVAIKGPLRISASSAAQRRGRIGRNPNRDGDSYYYSEPTSEDNAHHVCWLEASMLLDNMEVRGGMVAPLYGIEGTKTPVSPGEMRLRDDQRRVFRELVRGCDLPVWLSWQVAKPGLKTNDRKWCFEGPEEHEILNDNGETVKCRSPGGAKKALRPRWCDERVSSDQSALADFIKFAEGRRGAAEMLVVLTELPDFLAKKGGEAMDTISVFLHSEEGSRAYRNALSMMPEAMTIVMLFILAGLLTSGMVIFFMSPKGMSRMSMAMGTMAGSGYLMFLGGVKPTHISYVMLIFFVLMVVIIPEPGQQRTIQDNQVAYLIIGILTLLSIVAANELGMLEKTKEDFFGRRNIATSGGTIPWSWPDLDLKPGAAWTVYVGIVTMLSPMLHHWIKVEYGNLSLSGIAQSASVLSFMDKGIPFMKMNISVVILLVSGWNSITVIPLLCGVGGAMLHWTLILPGIKAQQSKLAQKRVFHGVAKNPVVDGNPTADIEEAPEMPALYEKKLALYLLLALSLMSVAMCRTPFSLAEGIVLSSAALGPLIEGNTSLLWNGPMAVSMTGVMRGNYYAFVGVMYNLWKMKTGRRGSASGKTLGEVWKRELNLLDKQQFELYKRTDITEVDRDMARRHLAEGKVDTGVAVSRGTAKLRWFHERGYVKLEGRVMDLGCGRGGWCYYAAAQKEVSGVKGYTLGRDGHEKPMNVQSLGWNIVTFKDKTDIHRLEPAKCETLLCDIGESSPSSVTEGERTLRVLETIEKWLACGVDNFCVKVLAPYMPDVIEKLELLQRRFGGTIIRNPLSRNSTHEMYYVSGARSNITFTVNQTSRLLMRRMRRPTGKVTLEPDVILPIGTRSVETDKGPLDRDAIEERVERIKTEYAATWFYDNDNPYRTWHYCGSYITKTSGSAASMINGVIKILTFPWDRIEEVTRMAMTDTTPFGQQRVFKEKVDTRAKDPPAGTRKIMKVVNRWLFRHLAREKNPRLCTKEEFIAKVRSHAAVGAFLEEQEQWKTANEAVQDPKFWEMVDAERKLHQQGRCQSCVYNMMGKREKKLSEFGKAKGSRAIWYMWLGARFLEFEALGFLNEDHWASRENSGGGVEGIGLQYLGYVIKDLSTKEGGGFYADDTAGWDTRITEADLDDEQEIMSYMNAEQRKLAWAVMEMTYKNKVVKVLRPAPGGKAFMDIISRRDQRGSGQVVTYALNTITNLKVQLIRMAEAEMVINHQHVNECDEGVLARLDAWLAENGCDRLARMAVSGDDCVVRPVDDRFGLALSHLNAMSKVRKDISEWQPSKEWTDWENVPFCSHHFHELVLKDGRKVVVPCRDQDELIGRGRVSPGNGWMIKETACLSKAYANMWSLMYFHKRDMRLLSFAVSSAVPMAWVPSGRTTWSVHGKGEWMTTQDMLDVWNRVWVLNNPHMKDKTTVKEWRDVPYLTKRQDKLCGSLIGMTNRATWASHIHLVIHRIRTLIGQEKYTDYLTVMDRYSVDADLQPGELI.

Residues 1–104 (MSGRKAQGKT…LSSRKRRSNE (104 aa)) are Cytoplasmic-facing. Residues 38 to 72 (PGPSRGVQGFIFFFLFNILTGKKLTTHLKRLWRML) are hydrophobic; homodimerization of capsid protein C. A propeptide spans 102–121 (SNEMAMMPLLILSMVILAGG) (ER anchor for the capsid protein C, removed in mature form by serine protease NS3). A helical membrane pass occupies residues 105-125 (MAMMPLLILSMVILAGGVTLV). The Extracellular portion of the chain corresponds to 126–244 (RKNRWLLLNV…GERQLQKIER (119 aa)). Asparagine 134 and asparagine 150 each carry an N-linked (GlcNAc...) asparagine; by host glycan. A helical membrane pass occupies residues 245-265 (WLVRNPFFAITALAIAYLVGN). Residues 266–270 (NMTQR) lie on the Cytoplasmic side of the membrane. Residues 271–285 (VVIALLVLAVGPAYS) form a helical membrane-spanning segment. Over 286-730 (AHCIGITDRD…TVFGSAFQGL (445 aa)) the chain is Extracellular. 8 disulfides stabilise this stretch: cysteine 288/cysteine 315, cysteine 345/cysteine 401, cysteine 345/cysteine 406, cysteine 359/cysteine 390, cysteine 377/cysteine 401, cysteine 377/cysteine 406, cysteine 467/cysteine 568, and cysteine 585/cysteine 615. The segment at 383–396 (DRGWGNGCGLFGKG) is fusion peptide. The chain crosses the membrane as a helical span at residues 731–751 (FGGLSWITKVIMGAVLIWVGI). Over 752–757 (NTRNMT) the chain is Extracellular. A helical membrane pass occupies residues 758-778 (MSMSMILVGVIMMFLSLGVGA). At 779–1132 (DQGCAVNFGK…LVRSWVTAGE (354 aa)) the chain is on the extracellular side. 6 disulfide bridges follow: cysteine 782–cysteine 793, cysteine 833–cysteine 921, cysteine 957–cysteine 1002, cysteine 1058–cysteine 1107, cysteine 1069–cysteine 1091, and cysteine 1090–cysteine 1094. Residues asparagine 908 and asparagine 986 are each glycosylated (N-linked (GlcNAc...) asparagine; by host). Residues 1133-1153 (VHAVPFGLVSMMIAMEVVLRK) traverse the membrane as a helical segment. The Cytoplasmic portion of the chain corresponds to 1154–1201 (RQGPKQMLVGGIILLGAMLVGQVTVLDLVKLIVAVGLHFHEINNGGDA). A helical membrane pass occupies residues 1202 to 1222 (MYMALIASFSIRPGLLVGFGL). Residues 1223 to 1287 (RTLWSPRERL…VLPLMALLTP (65 aa)) are Lumenal-facing. A helical transmembrane segment spans residues 1288–1308 (VTMHEVRMATMLFCTVVIVGV). Residues 1309 to 1355 (LHQNAKDTSMQKTIPIVALTLTSYMGLTQPFLGLCAYMSTQVFGRRS) are Cytoplasmic-facing. The helical transmembrane segment at 1356-1376 (IPVNEALAAAGLVGVLAGLAF) threads the bilayer. Residues 1377–1378 (QD) are Lumenal-facing. The helical transmembrane segment at 1379 to 1399 (MENFLGPIAVGGILMMLVSVA) threads the bilayer. The Cytoplasmic segment spans residues 1400 to 1456 (GKVDGLELKKLGEVSWEEEAEISGSSSRYDVALSEQGEFKLLSEDKVPWDQIVMTSL). Positions 1407 to 1446 (LKKLGEVSWEEEAEISGSSSRYDVALSEQGEFKLLSEDKV) are interacts with and activates NS3 protease. An intramembrane region (helical) is located at residues 1457-1477 (ALVGAAIHPFALLLVLGGWVL). At 1478–2157 (HIKGARRSGD…RNALSMMPEA (680 aa)) the chain is on the cytoplasmic side. The 181-residue stretch at 1485–1665 (SGDVLWDIPT…EVKEESKEEL (181 aa)) folds into the Peptidase S7 domain. Residues histidine 1537, aspartate 1561, and serine 1622 each act as charge relay system; for serine protease NS3 activity in the active site. The Helicase ATP-binding domain occupies 1669–1825 (PTMLKKGMTT…HSNGEIEDVQ (157 aa)). The interval 1673-1676 (KKGM) is important for RNA-binding. 1682-1689 (FHPGAGKT) provides a ligand contact to ATP. Residues 1773–1776 (DEAH) carry the DEAH box motif. Positions 1820–1997 (EIEDVQTDIP…VRGGMVAPLY (178 aa)) constitute a Helicase C-terminal domain. An N6-acetyllysine; by host modification is found at lysine 1877. Residues 1942–1961 (AAQRRGRIGRNPNRDGDSYY) are disordered. A helical transmembrane segment spans residues 2158-2178 (MTIVMLFILAGLLTSGMVIFF). Over 2179 to 2186 (MSPKGMSR) the chain is Lumenal. The segment at residues 2187 to 2207 (MSMAMGTMAGSGYLMFLGGVK) is an intramembrane region (helical). At 2208–2209 (PT) the chain is on the lumenal side. The helical transmembrane segment at 2210–2230 (HISYVMLIFFVLMVVIIPEPG) threads the bilayer. At 2231–2241 (QQRTIQDNQVA) the chain is on the cytoplasmic side. A helical transmembrane segment spans residues 2242–2262 (YLIIGILTLLSIVAANELGML). Residues 2263–2293 (EKTKEDFFGRRNIATSGGTIPWSWPDLDLKP) are Lumenal-facing. The segment at residues 2294–2314 (GAAWTVYVGIVTMLSPMLHHW) is an intramembrane region (helical). Residues 2315–2360 (IKVEYGNLSLSGIAQSASVLSFMDKGIPFMKMNISVVILLVSGWNS) are Lumenal-facing. A helical membrane pass occupies residues 2361–2380 (ITVIPLLCGVGGAMLHWTLI). At 2381-2421 (LPGIKAQQSKLAQKRVFHGVAKNPVVDGNPTADIEEAPEMP) the chain is on the cytoplasmic side. The helical transmembrane segment at 2422–2442 (ALYEKKLALYLLLALSLMSVA) threads the bilayer. The Lumenal portion of the chain corresponds to 2443–2445 (MCR). The helical transmembrane segment at 2446-2466 (TPFSLAEGIVLSSAALGPLIE) threads the bilayer. The Cytoplasmic segment spans residues 2467–3411 (GNTSLLWNGP…VDADLQPGEL (945 aa)). The mRNA cap 0-1 NS5-type MT domain maps to 2508 to 2772 (GSASGKTLGE…DVILPIGTRS (265 aa)). An S-adenosyl-L-methionine-binding site is contributed by serine 2563. The residue at position 2563 (serine 2563) is a Phosphoserine. Catalysis depends on lysine 2568, which acts as the For 2'-O-MTase activity. Positions 2593, 2594, 2611, 2612, 2638, and 2639 each coordinate S-adenosyl-L-methionine. Aspartate 2653 serves as the catalytic For 2'-O-MTase activity. Isoleucine 2654 is a binding site for S-adenosyl-L-methionine. Residues lysine 2689 and glutamate 2725 each act as for 2'-O-MTase activity in the active site. Tyrosine 2727 serves as a coordination point for S-adenosyl-L-methionine. Positions 2879–2912 (RKIMKVVNRWLFRHLAREKNPRLCTKEEFIAKVR) match the Nuclear localization signal motif. 4 residues coordinate Zn(2+): glutamate 2946, histidine 2950, cysteine 2955, and cysteine 2958. Residues 3036–3188 (GGFYADDTAG…RPVDDRFGLA (153 aa)) enclose the RdRp catalytic domain. Histidine 3223, cysteine 3239, and cysteine 3358 together coordinate Zn(2+).

In the N-terminal section; belongs to the class I-like SAM-binding methyltransferase superfamily. mRNA cap 0-1 NS5-type methyltransferase family. In terms of assembly, homodimer. Interacts (via N-terminus) with host EXOC1 (via C-terminus); this interaction results in EXOC1 degradation through the proteasome degradation pathway. As to quaternary structure, forms heterodimers with envelope protein E in the endoplasmic reticulum and Golgi. Homodimer; in the endoplasmic reticulum and Golgi. Interacts with protein prM. Interacts with non-structural protein 1. In terms of assembly, homodimer; Homohexamer when secreted. Interacts with envelope protein E. As to quaternary structure, interacts (via N-terminus) with serine protease NS3. Forms a heterodimer with serine protease NS3. May form homooligomers. In terms of assembly, forms a heterodimer with NS2B. Interacts with non-structural protein 2A (via N-terminus). Interacts with NS4B. Interacts with unphosphorylated RNA-directed RNA polymerase NS5; this interaction stimulates RNA-directed RNA polymerase NS5 guanylyltransferase activity. NS3 interacts with host PDCD6IP; this interaction contributes to virion release. As to quaternary structure, interacts with serine protease NS3. Homodimer. Interacts with host STAT2; this interaction prevents the establishment of cellular antiviral state. Interacts with serine protease NS3. Interacts with host TRIM23; this interaction leads to NS5 ubiquitination. Specific enzymatic cleavages in vivo yield mature proteins. The nascent capsid protein C contains a C-terminal hydrophobic domain that act as a signal sequence for translocation of prM into the lumen of the ER. Mature capsid protein C is cleaved at a site upstream of this hydrophobic domain by NS3. prM is cleaved in post-Golgi vesicles by a host furin, releasing the mature small envelope protein M, and peptide pr. Non-structural protein 2A-alpha, a C-terminally truncated form of non-structural protein 2A, results from partial cleavage by NS3. Specific enzymatic cleavages in vivo yield mature proteins peptide 2K acts as a signal sequence and is removed from the N-terminus of NS4B by the host signal peptidase in the ER lumen. Signal cleavage at the 2K-4B site requires a prior NS3 protease-mediated cleavage at the 4A-2K site. Post-translationally, cleaved in post-Golgi vesicles by a host furin, releasing the mature small envelope protein M, and peptide pr. This cleavage is incomplete as up to 30% of viral particles still carry uncleaved prM. In terms of processing, N-glycosylated. N-glycosylated. The excreted form is glycosylated and this is required for efficient secretion of the protein from infected cells. Post-translationally, polyubiquitinated; ubiquitination is probably mediated by host TRIM23 and is prerequisite for NS5-STAT2 interaction. NS5 is not ISGylated or sumoylated. In terms of processing, acetylated by host KAT5. Acetylation modulates NS3 RNA-binding and unwinding activities and plays an important positive role for viral replication. Phosphorylated on serines residues. This phosphorylation may trigger NS5 nuclear localization.

Its subcellular location is the virion. It localises to the host nucleus. The protein resides in the host cytoplasm. It is found in the host perinuclear region. The protein localises to the secreted. Its subcellular location is the virion membrane. It localises to the host endoplasmic reticulum membrane. The enzyme catalyses Selective hydrolysis of -Xaa-Xaa-|-Yaa- bonds in which each of the Xaa can be either Arg or Lys and Yaa can be either Ser or Ala.. It catalyses the reaction RNA(n) + a ribonucleoside 5'-triphosphate = RNA(n+1) + diphosphate. The catalysed reaction is a ribonucleoside 5'-triphosphate + H2O = a ribonucleoside 5'-diphosphate + phosphate + H(+). It carries out the reaction ATP + H2O = ADP + phosphate + H(+). The enzyme catalyses a 5'-end (5'-triphosphoguanosine)-ribonucleoside in mRNA + S-adenosyl-L-methionine = a 5'-end (N(7)-methyl 5'-triphosphoguanosine)-ribonucleoside in mRNA + S-adenosyl-L-homocysteine. It catalyses the reaction a 5'-end (N(7)-methyl 5'-triphosphoguanosine)-ribonucleoside in mRNA + S-adenosyl-L-methionine = a 5'-end (N(7)-methyl 5'-triphosphoguanosine)-(2'-O-methyl-ribonucleoside) in mRNA + S-adenosyl-L-homocysteine + H(+). Plays a role in virus budding by binding to the cell membrane and gathering the viral RNA into a nucleocapsid that forms the core of a mature virus particle. During virus entry, may induce genome penetration into the host cytoplasm after hemifusion induced by the surface proteins. Can migrate to the cell nucleus where it modulates host functions. Its function is as follows. Inhibits RNA silencing by interfering with host Dicer. Functionally, prevents premature fusion activity of envelope proteins in trans-Golgi by binding to envelope protein E at pH6.0. After virion release in extracellular space, gets dissociated from E dimers. In terms of biological role, acts as a chaperone for envelope protein E during intracellular virion assembly by masking and inactivating envelope protein E fusion peptide. prM is the only viral peptide matured by host furin in the trans-Golgi network probably to avoid catastrophic activation of the viral fusion activity in acidic Golgi compartment prior to virion release. prM-E cleavage is inefficient, and many virions are only partially matured. These uncleaved prM would play a role in immune evasion. May play a role in virus budding. Exerts cytotoxic effects by activating a mitochondrial apoptotic pathway through M ectodomain. May display a viroporin activity. Its function is as follows. Binds to host cell surface receptor and mediates fusion between viral and cellular membranes. Envelope protein is synthesized in the endoplasmic reticulum in the form of heterodimer with protein prM. They play a role in virion budding in the ER, and the newly formed immature particle is covered with 60 spikes composed of heterodimer between precursor prM and envelope protein E. The virion is transported to the Golgi apparatus where the low pH causes dissociation of PrM-E heterodimers and formation of E homodimers. prM-E cleavage is inefficient, and many virions are only partially matured. These uncleaved prM would play a role in immune evasion. Functionally, involved in immune evasion, pathogenesis and viral replication. Once cleaved off the polyprotein, is targeted to three destinations: the viral replication cycle, the plasma membrane and the extracellular compartment. Essential for viral replication. Required for formation of the replication complex and recruitment of other non-structural proteins to the ER-derived membrane structures. Excreted as a hexameric lipoparticle that plays a role against host immune response. Antagonizing the complement function. Binds to the host macrophages and dendritic cells. Inhibits signal transduction originating from Toll-like receptor 3 (TLR3). In terms of biological role, component of the viral RNA replication complex that functions in virion assembly and antagonizes the host immune response. Required cofactor for the serine protease function of NS3. May have membrane-destabilizing activity and form viroporins. Its function is as follows. Displays three enzymatic activities: serine protease, NTPase and RNA helicase. NS3 serine protease, in association with NS2B, performs its autocleavage and cleaves the polyprotein at dibasic sites in the cytoplasm: C-prM, NS2A-NS2B, NS2B-NS3, NS3-NS4A, NS4A-2K and NS4B-NS5. NS3 RNA helicase binds RNA and unwinds dsRNA in the 3' to 5' direction. Also plays a role in virus assembly. Functionally, regulates the ATPase activity of the NS3 helicase activity. NS4A allows NS3 helicase to conserve energy during unwinding. In terms of biological role, functions as a signal peptide for NS4B and is required for the interferon antagonism activity of the latter. Induces the formation of ER-derived membrane vesicles where the viral replication takes place. Inhibits interferon (IFN)-induced host STAT1 phosphorylation and nuclear translocation, thereby preventing the establishment of cellular antiviral state by blocking the IFN-alpha/beta pathway. Its function is as follows. Replicates the viral (+) and (-) RNA genome, and performs the capping of genomes in the cytoplasm. NS5 methylates viral RNA cap at guanine N-7 and ribose 2'-O positions. Besides its role in RNA genome replication, also prevents the establishment of cellular antiviral state by blocking the interferon-alpha/beta (IFN-alpha/beta) signaling pathway. IFN-I induces binding of NS5 to host IFN-activated transcription factor STAT2, preventing its transcriptional activity. Host TRIM23 is the E3 ligase that interacts with and polyubiquitinates NS5 to promote its binding to STAT2 and trigger IFN-I signaling inhibition. This Yellow fever virus (isolate Ethiopia/Couma/1961) (YFV) protein is Genome polyprotein.